The primary structure comprises 265 residues: Protein Exd1 homolog (265 aa).

The 3'-5' exonuclease domain occupies 32 to 82 (EKQLDRIVLIYQVDTTYHSALKDIKDQKIISLLVEPSFYGRHHPTSILVVA).

This sequence belongs to the EXD1 family. Homodimer.

RNA-binding protein. Inactive exonuclease. This is Protein Exd1 homolog from Drosophila melanogaster (Fruit fly).